A 547-amino-acid polypeptide reads, in one-letter code: MRQKRKGDLSPAELMMLTIGDVIKQLIEAHEQGKDIDLNKVKTKTAAKYGLSAQPRLVDIIAAVPPQYRKVLMPKLKAKPIRTASGIAVVAVMCKPHRCPHISFTGNICVYCPGGPDSDFEYSTQSYTGYEPTSMRAIRARYDPFLQTRHRIEQLKQLGHSVDKVEFIVMGGTFMALPEEYRDYFIRNLHDALSGHTSNNIYEAVKYSERSLTKCIGITIETRPDYCMKRHLSDMLTYGCTRLEIGVQSVYEDVARDTNRGHTVKAVCESFHLAKDSGFKVVAHMMPDLPNVGLERDIEQFTEFFENPAFRPDGLKLYPTLVIRGTGLYELWKSGRYKSYSPSDLVELVARILALVPPWTRVYRVQRDIPMPLVSSGVEHGNLRELALARMKDLGIQCRDVRTREVGIQEIHHKVRPYQVELVRRDYVANGGWETFLSYEDPDQDILIGLLRLRKCSEETFRFELGGGVSIVRELHVYGSVVPVSSRDPTKFQHQGFGMLLMEEAERIAREEHGSGKIAVISGVGTRNYYRKIGYRLQGPYMVKMLK.

Residues 82–372 form the Radical SAM core domain; that stretch reads RTASGIAVVA…YRVQRDIPMP (291 aa). Residues C99, C109, and C112 each contribute to the [4Fe-4S] cluster site. A Phosphoserine modification is found at S161. Position 164 (K164) interacts with acetyl-CoA. Y202 is subject to Phosphotyrosine; by ALK. At K229 the chain carries N6-methyllysine. At Y251 the chain carries Phosphotyrosine. The region spanning 396 to 547 is the N-acetyltransferase domain; sequence IQCRDVRTRE…QGPYMVKMLK (152 aa). Acetyl-CoA contacts are provided by residues 474–477, 497–499, and Y530; these read ELHV and FGM.

The protein belongs to the ELP3 family. As to quaternary structure, component of the elongator complex which consists of ELP1, ELP2, ELP3, ELP4, ELP5 and ELP6. ELP1, ELP2 and ELP3 form the elongator core complex. Interacts with alpha-tubulin. The cofactor is [4Fe-4S] cluster. Post-translationally, tyrosine-phosphorylated; phosphorylation on Tyr-202 does not affect elongator complex integrity or ELP3 protein stability. Also serine/threonine-phosphorylated. Expressed in the cerebellum and spinal motor neurons.

It is found in the cytoplasm. It localises to the nucleus. The catalysed reaction is uridine(34) in tRNA + acetyl-CoA + S-adenosyl-L-methionine + H2O = 5-(carboxymethyl)uridine(34) in tRNA + 5'-deoxyadenosine + L-methionine + CoA + 2 H(+). It participates in tRNA modification; 5-methoxycarbonylmethyl-2-thiouridine-tRNA biosynthesis. Catalytic tRNA acetyltransferase subunit of the elongator complex which is required for multiple tRNA modifications, including mcm5U (5-methoxycarbonylmethyl uridine), mcm5s2U (5-methoxycarbonylmethyl-2-thiouridine), and ncm5U (5-carbamoylmethyl uridine). In the elongator complex, acts as a tRNA uridine(34) acetyltransferase by mediating formation of carboxymethyluridine in the wobble base at position 34 in tRNAs. May also act as a protein lysine acetyltransferase by mediating acetylation of target proteins; such activity is however unclear in vivo and recent evidences suggest that ELP3 primarily acts as a tRNA acetyltransferase. Involved in neurogenesis: regulates the migration and branching of projection neurons in the developing cerebral cortex, through a process depending on alpha-tubulin acetylation. Required for acetylation of GJA1 in the developing cerebral cortex. The sequence is that of Elongator complex protein 3 from Homo sapiens (Human).